A 189-amino-acid polypeptide reads, in one-letter code: Peptidyl-tRNA hydrolase (189 aa).

Tyrosine 15 lines the tRNA pocket. Histidine 20 functions as the Proton acceptor in the catalytic mechanism. 3 residues coordinate tRNA: phenylalanine 66, asparagine 68, and asparagine 114.

It belongs to the PTH family. In terms of assembly, monomer.

The protein resides in the cytoplasm. It catalyses the reaction an N-acyl-L-alpha-aminoacyl-tRNA + H2O = an N-acyl-L-amino acid + a tRNA + H(+). Its function is as follows. Hydrolyzes ribosome-free peptidyl-tRNAs (with 1 or more amino acids incorporated), which drop off the ribosome during protein synthesis, or as a result of ribosome stalling. In terms of biological role, catalyzes the release of premature peptidyl moieties from peptidyl-tRNA molecules trapped in stalled 50S ribosomal subunits, and thus maintains levels of free tRNAs and 50S ribosomes. This Streptococcus suis (strain 98HAH33) protein is Peptidyl-tRNA hydrolase.